A 77-amino-acid polypeptide reads, in one-letter code: ATP synthase subunit c (77 aa).

Transmembrane regions (helical) follow at residues 13 to 33 and 55 to 75; these read IATV…GIVA and FLGI…YFIF.

This sequence belongs to the ATPase C chain family. F-type ATPases have 2 components, F(1) - the catalytic core - and F(0) - the membrane proton channel. F(1) has five subunits: alpha(3), beta(3), gamma(1), delta(1), epsilon(1). F(0) has three main subunits: a(1), b(2) and c(10-14). The alpha and beta chains form an alternating ring which encloses part of the gamma chain. F(1) is attached to F(0) by a central stalk formed by the gamma and epsilon chains, while a peripheral stalk is formed by the delta and b chains.

Its subcellular location is the cell membrane. Functionally, f(1)F(0) ATP synthase produces ATP from ADP in the presence of a proton or sodium gradient. F-type ATPases consist of two structural domains, F(1) containing the extramembraneous catalytic core and F(0) containing the membrane proton channel, linked together by a central stalk and a peripheral stalk. During catalysis, ATP synthesis in the catalytic domain of F(1) is coupled via a rotary mechanism of the central stalk subunits to proton translocation. Its function is as follows. Key component of the F(0) channel; it plays a direct role in translocation across the membrane. A homomeric c-ring of between 10-14 subunits forms the central stalk rotor element with the F(1) delta and epsilon subunits. The protein is ATP synthase subunit c of Clavibacter sepedonicus (Clavibacter michiganensis subsp. sepedonicus).